Here is a 56-residue protein sequence, read N- to C-terminus: Conotoxin Cal6.41c (56 aa).

The N-terminal stretch at 1 to 23 is a signal peptide; it reads MSGSGAMLLGLLILVAMATSLDT. Intrachain disulfides connect C27-C41, C33-C50, and C40-C54.

In terms of tissue distribution, expressed by the venom duct.

Its subcellular location is the secreted. Its function is as follows. Probable neurotoxin. This Californiconus californicus (California cone) protein is Conotoxin Cal6.41c.